The following is a 464-amino-acid chain: MTEEKTPKQIVELLDKYIIGQNEAKKSVAVALYNRYRRLQLPKQMQQDITPKNMLMAGPTGVGKTEIARRLAKIVDAPFVKVEATKFTEVGYVGRDVESMVRDLVEEAVRMEEKEQFDRVKLQATKKANNRLVKLIVPGIKRENRENSMQQMMQMLSGNFNMNQAQDNEEVTDDIRNERLSVADQLNKGLLENREVTIEVEQAPKVNPMGDMMGQMGIDMSSLMGDLMPKKTVKRTLKVSDAREVLIQEESKKLINYDSLYQRAIERTQQNGIIFIDEIDKITAGNKKTSGEVSREGVQRDILPIVEGSTVSTKYGPVSTDHILFIAAGAFAESKPSDLIPELQGRFPIRVELNALTQEDFVKILKDPQNSLLKQYIALLKADGIKLVFTQEAIDRIAQIAFEVNQGTDNIGARRLATILEKLLEDVLYEGPDMNMGEITITQKYVDQKLSDIIINKDLTKFIL.

ATP is bound by residues I19, 61–66 (GVGKTE), D277, E342, and R414.

This sequence belongs to the ClpX chaperone family. HslU subfamily. As to quaternary structure, a double ring-shaped homohexamer of HslV is capped on each side by a ring-shaped HslU homohexamer. The assembly of the HslU/HslV complex is dependent on binding of ATP.

The protein localises to the cytoplasm. ATPase subunit of a proteasome-like degradation complex; this subunit has chaperone activity. The binding of ATP and its subsequent hydrolysis by HslU are essential for unfolding of protein substrates subsequently hydrolyzed by HslV. HslU recognizes the N-terminal part of its protein substrates and unfolds these before they are guided to HslV for hydrolysis. The protein is ATP-dependent protease ATPase subunit HslU of Lactobacillus gasseri (strain ATCC 33323 / DSM 20243 / BCRC 14619 / CIP 102991 / JCM 1131 / KCTC 3163 / NCIMB 11718 / NCTC 13722 / AM63).